The chain runs to 590 residues: MIRTQDAGALRAENVGQTVTLAGWVANRRDHGGVAFIDLREASGVVQVVIRDEQVAHHLRAEYCLAVTGEVTRRKEGNENPNLATGEVEVVANEVEVLSAAAPLPFPISDHVDVGEEARLKHRYLDLRRSGPNNALRLRSKVNKAARDVLDRHDFVEIETPTLTRSTPEGARDFLVPARLQPGSWYALPQSPQLFKQLLMVAGMERYYQIARCYRDEDFRADRQPEFTQLDIEMSFVEQDDVLAVAEEVLVALWKLVGHDVPVPLPRMTYAESMERYGTDKPDLRMGQELVDCTAYFADTPFRVFQADYVGAVVMPGGASQPRKQLDAWQEWAKQRGAKGLAYVLVQDDGELTGPVSKNITDGESAGLAEHTGAKPGDCIFFAAGAPKPSRALLGAARLEIGRRCDLIDEDAWSFLWVVDAPLFEPTADATASGDVALGYSAWTAVHHAFTSPQDVDGFDADPGSALAWAYDIVCNGNEIGGGSIRIHREDVQKRVFAIMGIDEAEAQEKFGFLLEAFKYGAPPHGGIAFGWDRIVALLAGTESIRDVIAFPKSGGGFDPLTAAPAPITPEQRKEAGVDARPQQDLPPQS.

Glu169 contributes to the L-aspartate binding site. The segment at 193-196 (QLFK) is aspartate. An L-aspartate-binding site is contributed by Arg215. ATP-binding positions include 215–217 (RDE) and Gln224. Residue His447 coordinates L-aspartate. Position 479 (Glu479) interacts with ATP. Arg486 provides a ligand contact to L-aspartate. Residue 531 to 534 (GWDR) coordinates ATP. A disordered region spans residues 556 to 590 (GGFDPLTAAPAPITPEQRKEAGVDARPQQDLPPQS).

The protein belongs to the class-II aminoacyl-tRNA synthetase family. Type 1 subfamily. As to quaternary structure, homodimer.

It localises to the cytoplasm. It carries out the reaction tRNA(Asx) + L-aspartate + ATP = L-aspartyl-tRNA(Asx) + AMP + diphosphate. Functionally, aspartyl-tRNA synthetase with relaxed tRNA specificity since it is able to aspartylate not only its cognate tRNA(Asp) but also tRNA(Asn). Reaction proceeds in two steps: L-aspartate is first activated by ATP to form Asp-AMP and then transferred to the acceptor end of tRNA(Asp/Asn). The sequence is that of Aspartate--tRNA(Asp/Asn) ligase from Nocardioides sp. (strain ATCC BAA-499 / JS614).